A 443-amino-acid polypeptide reads, in one-letter code: Xaa-Pro dipeptidase (443 aa).

Mn(2+) contacts are provided by aspartate 246, aspartate 257, histidine 339, glutamate 384, and glutamate 423.

This sequence belongs to the peptidase M24B family. Bacterial-type prolidase subfamily. Mn(2+) serves as cofactor.

It carries out the reaction Xaa-L-Pro dipeptide + H2O = an L-alpha-amino acid + L-proline. Functionally, splits dipeptides with a prolyl residue in the C-terminal position. The sequence is that of Xaa-Pro dipeptidase from Cronobacter sakazakii (strain ATCC BAA-894) (Enterobacter sakazakii).